The following is a 954-amino-acid chain: Endogenous retrovirus group K member 25 Pol protein (954 aa).

Residues 57–245 (LEKGHIEPSF…TPFHYLGMQI (189 aa)) form the Reverse transcriptase domain. Positions 161–164 (LPQG) match the LPQG motif. The YXDD motif lies at 195-198 (YIDD). The 129-residue stretch at 460–588 (LENALTVFTD…ADLLVSSALI (129 aa)) folds into the RNase H type-1 domain. Positions 469, 497, 515, and 580 each coordinate Mg(2+). The Integrase-type zinc finger occupies 585 to 626 (SALIKAQELHALTHVNAAGLKNKFDVTWKLAKDIVQHCTQCQ). Zn(2+) is bound by residues His-594, His-598, Cys-622, and Cys-625. Residues 640 to 801 (RGLCPNALWQ…TSAEQHLTGK (162 aa)) enclose the Integrase catalytic domain. The integrase-type DNA-binding region spans 809 to 857 (KLIWWKDNKNKTWEIGKVITWGRGFACVSPGENQLPVWIPTRHLKFYNE). The tract at residues 862 to 888 (AKKSTSAETETPQSSTVDSQDEQNGDV) is disordered. Residues 867 to 879 (SAETETPQSSTVD) show a composition bias toward polar residues.

It belongs to the beta type-B retroviral polymerase family. HERV class-II K(HML-2) pol subfamily.

The enzyme catalyses DNA(n) + a 2'-deoxyribonucleoside 5'-triphosphate = DNA(n+1) + diphosphate. It catalyses the reaction Endonucleolytic cleavage to 5'-phosphomonoester.. Functionally, early post-infection, the reverse transcriptase converts the viral RNA genome into double-stranded viral DNA. The RNase H domain of the reverse transcriptase performs two functions. It degrades the RNA template and specifically removes the RNA primer from the RNA/DNA hybrid. Following nuclear import, the integrase catalyzes the insertion of the linear, double-stranded viral DNA into the host cell chromosome. Endogenous Pol proteins may have kept, lost or modified their original function during evolution. The protein is Endogenous retrovirus group K member 25 Pol protein (ERVK-25) of Homo sapiens (Human).